The following is a 263-amino-acid chain: GTP cyclohydrolase FolE2 (263 aa).

Belongs to the GTP cyclohydrolase IV family.

It carries out the reaction GTP + H2O = 7,8-dihydroneopterin 3'-triphosphate + formate + H(+). It participates in cofactor biosynthesis; 7,8-dihydroneopterin triphosphate biosynthesis; 7,8-dihydroneopterin triphosphate from GTP: step 1/1. Its function is as follows. Converts GTP to 7,8-dihydroneopterin triphosphate. The protein is GTP cyclohydrolase FolE2 of Nitrosospira multiformis (strain ATCC 25196 / NCIMB 11849 / C 71).